Reading from the N-terminus, the 228-residue chain is UPF0758 protein stu1465 (228 aa).

Residues 103–225 (QIMSSQQVAR…YYSFREERED (123 aa)) form the MPN domain. Zn(2+) contacts are provided by His174, His176, and Asp187. A JAMM motif motif is present at residues 174 to 187 (HNHPSGEAYPSRND).

Belongs to the UPF0758 family.

The protein is UPF0758 protein stu1465 of Streptococcus thermophilus (strain ATCC BAA-250 / LMG 18311).